Consider the following 787-residue polypeptide: MTRDQRVCIFGEKKSTVRSVTFKAPKSNYDLTSWRIWEQAFRLNVSNSKKCFDTISGHRITLPTNARGLFTGYDYESKRHRIVIRGYDKFFNIDEVPITTWDALSQHTKGPYELTVKENGCIIFIAALPDGQIIVSSKHSLGIVEGQSVSHANVGERWLEKHLQSVGRTKQELAHELLRRDMTAVAELCDDEFEEHILPYTGNSRGLYLHGLNRNCPQFITASSCEVAEFAEQWGFMKVSSFFMDSIHELKAFLENASKDGKWNNRAIEGFVIRCHSDHSSLEQQSSNDFFFKYKFPEPYGMFRQWREVTKMLISGKKPSYTKYKKVTAEYITFCDKKFKEDEDAKRLYMSNKGIISLRDEFLVLSKLDLMHLSVSNDNDCGKEFTLLVPIATIGCGKTTVAKILEKLFGWPVVQNDNLPSGKGGPKRFAKAIIEEFRNGHSVVFADRNNHISNMRSTLQTDILALIDGVRFVALPFKHTPEVPEFVQNRVLQRGDRHQSIKVSEGVDKVKAIMNTFYKQYKPFDPAGNKHDANYDDIIELDPLIGSLENARRIVNYFKKNIPELIPNDPSDDDYAAALNYAVNEYVPTYRKTFGNDSKKIKNKITAEGITGSSTCFKKAPRYFGVLLDRKTVESSLVQVLTIANLQWQEAFSRYTLQDSFHITMIHESQKPVNSRIWEQYLQHMHDKNTTKMGNISFRITHLVWDDRVICFRVTMNENSVWYGKTCNPQLHITLGTSSSDVKAFESNFLLKKLRWQGDEVDSTDGNVRYLTVLPKIIIEGMLEPVY.

Lys-117 serves as the catalytic N6-AMP-lysine intermediate.

Belongs to the TRL1 family.

The protein resides in the cytoplasm. It carries out the reaction ATP + (ribonucleotide)n-3'-hydroxyl + 5'-phospho-(ribonucleotide)m = (ribonucleotide)n+m + AMP + diphosphate.. Its function is as follows. Required for the splicing of precursor tRNA molecules containing introns. The ligation activity requires three enzymatic activities: phosphorylation of the 5' terminus of the 3' half-tRNA in the presence of ATP, opening of the 2'3'-cyclic phosphodiester bond of the 5' half-tRNA leaving a 2'-phosphomonoester and ligation of the two tRNA halves in an ATP-dependent reaction. This is tRNA ligase 1 (trl1) from Schizosaccharomyces pombe (strain 972 / ATCC 24843) (Fission yeast).